Here is a 161-residue protein sequence, read N- to C-terminus: UPF0225 protein HI_0277 (161 aa).

This sequence belongs to the UPF0225 family.

The sequence is that of UPF0225 protein HI_0277 from Haemophilus influenzae (strain ATCC 51907 / DSM 11121 / KW20 / Rd).